Reading from the N-terminus, the 427-residue chain is Adenylosuccinate synthetase (427 aa).

GTP-binding positions include 12 to 18 and 40 to 42; these read GDEGKGK and GHT. Residue aspartate 13 is the Proton acceptor of the active site. Aspartate 13 and glycine 40 together coordinate Mg(2+). IMP contacts are provided by residues 13–16, 38–41, threonine 128, arginine 142, glutamine 223, threonine 238, and arginine 302; these read DEGK and NAGH. The active-site Proton donor is histidine 41. Position 298-304 (298-304) interacts with substrate; the sequence is VTTGRAR. GTP-binding positions include arginine 304, 330–332, and 412–414; these read KLD and GVG.

This sequence belongs to the adenylosuccinate synthetase family. As to quaternary structure, homodimer. It depends on Mg(2+) as a cofactor.

Its subcellular location is the cytoplasm. The enzyme catalyses IMP + L-aspartate + GTP = N(6)-(1,2-dicarboxyethyl)-AMP + GDP + phosphate + 2 H(+). Its pathway is purine metabolism; AMP biosynthesis via de novo pathway; AMP from IMP: step 1/2. Its function is as follows. Plays an important role in the de novo pathway of purine nucleotide biosynthesis. Catalyzes the first committed step in the biosynthesis of AMP from IMP. The sequence is that of Adenylosuccinate synthetase from Frankia alni (strain DSM 45986 / CECT 9034 / ACN14a).